The primary structure comprises 194 residues: Fe/S biogenesis protein NfuA (194 aa).

Residues Cys-152 and Cys-155 each contribute to the [4Fe-4S] cluster site.

The protein belongs to the NfuA family. Homodimer. Requires [4Fe-4S] cluster as cofactor.

In terms of biological role, involved in iron-sulfur cluster biogenesis. Binds a 4Fe-4S cluster, can transfer this cluster to apoproteins, and thereby intervenes in the maturation of Fe/S proteins. Could also act as a scaffold/chaperone for damaged Fe/S proteins. The protein is Fe/S biogenesis protein NfuA of Pseudomonas putida (strain ATCC 700007 / DSM 6899 / JCM 31910 / BCRC 17059 / LMG 24140 / F1).